The sequence spans 523 residues: NAD(P)H-quinone oxidoreductase subunit 2 (523 aa).

Transmembrane regions (helical) follow at residues 30–50 (VGPEAAVLVAMIATLLVDLAG), 57–77 (WVPPICYAGLGSALVLLALQW), 94–114 (LAIAFRAVVALSTLLSLLISW), 128–148 (AAILLAATLGGMLLCGATDLV), 182–202 (LLVGSAAAAVFLYGASLLYGL), 223–243 (AALALVFVLATVAFKIAAVPF), 255–275 (PTPVVAFLSVGSKAAGFALAL), 291–311 (LLFTVLAILSMTLGNVVALAQ), 317–337 (MLAYSSIGQAGFVMIGLVCGT), 345–365 (VLYMATYLFMNLGAFACIILF), 389–409 (LGLSLCLLSLGGIPPMLGFFG), 424–444 (VLVVVGLVTSVISIYYYIGVI), and 477–497 (VALVLCVLVTAVGGILSNPLF).

The protein belongs to the complex I subunit 2 family. NDH-1 can be composed of about 15 different subunits; different subcomplexes with different compositions have been identified which probably have different functions.

The protein resides in the cellular thylakoid membrane. It carries out the reaction a plastoquinone + NADH + (n+1) H(+)(in) = a plastoquinol + NAD(+) + n H(+)(out). It catalyses the reaction a plastoquinone + NADPH + (n+1) H(+)(in) = a plastoquinol + NADP(+) + n H(+)(out). Functionally, NDH-1 shuttles electrons from an unknown electron donor, via FMN and iron-sulfur (Fe-S) centers, to quinones in the respiratory and/or the photosynthetic chain. The immediate electron acceptor for the enzyme in this species is believed to be plastoquinone. Couples the redox reaction to proton translocation, and thus conserves the redox energy in a proton gradient. Cyanobacterial NDH-1 also plays a role in inorganic carbon-concentration. This Synechococcus sp. (strain CC9311) protein is NAD(P)H-quinone oxidoreductase subunit 2.